Here is a 264-residue protein sequence, read N- to C-terminus: LIMR family protein SELMODRAFT_416716 (264 aa).

A run of 4 helical transmembrane segments spans residues 23–43 (VVILLTVLCLLLGFLYAVIGY), 96–116 (ILFTMFGGVGMATLPLSLIFA), 194–214 (IIWLLHIIVFMLVNPPAFPFL), and 225–245 (WGLLGTTTFAIFCYYLVMSVI).

The protein belongs to the LIMR family.

It localises to the membrane. This chain is LIMR family protein SELMODRAFT_416716, found in Selaginella moellendorffii (Spikemoss).